A 248-amino-acid chain; its full sequence is Probable transcriptional regulatory protein BT_2363 (248 aa).

The protein belongs to the TACO1 family.

It localises to the cytoplasm. The sequence is that of Probable transcriptional regulatory protein BT_2363 from Bartonella tribocorum (strain CIP 105476 / IBS 506).